The chain runs to 81 residues: MKTLLLTLVVVTIVCLDLGYTMTCYNQQSSQPQTTTTCAESSCYKKTWRDHRGTIIERGCGCPTVKPGIQRVCCATDKCNN.

Positions 1 to 21 (MKTLLLTLVVVTIVCLDLGYT) are cleaved as a signal peptide. 4 cysteine pairs are disulfide-bonded: C24/C43, C38/C60, C62/C73, and C74/C79.

Belongs to the three-finger toxin family. Short-chain subfamily. Type I alpha-neurotoxin sub-subfamily. Expressed by the venom gland.

It localises to the secreted. In terms of biological role, binds to muscle nicotinic acetylcholine receptor (nAChR) and inhibit acetylcholine from binding to the receptor, thereby impairing neuromuscular transmission. The polypeptide is Short neurotoxin 2 (Drysdalia coronoides (White-lipped snake)).